The chain runs to 149 residues: Gamma-glutamylaminecyclotransferase (149 aa).

7–10 (YGTL) contributes to the substrate binding site. Catalysis depends on E82, which acts as the Proton acceptor.

It belongs to the gamma-glutamylcyclotransferase family. In terms of assembly, monomer.

It catalyses the reaction epsilon-(gamma-L-glutamyl)-L-lysine = 5-oxo-L-proline + L-lysine. Its function is as follows. Contributes to degradation of proteins cross-linked by transglutaminases by degrading the cross-link between a lysine and a glutamic acid residue. Catalyzes the formation of 5-oxo-L-proline from L-gamma-glutamyl-L-epsilon-lysine. Inactive with L-gamma-glutamyl-alpha-amino acid substrates such as L-gamma-glutamyl-L-alpha-cysteine and L-gamma-glutamyl-L-alpha-alanine. This is Gamma-glutamylaminecyclotransferase (Ggact) from Rattus norvegicus (Rat).